The following is an 802-amino-acid chain: Leucine--tRNA ligase (802 aa).

The 'HIGH' region motif lies at 40–51 (PYPSGAGLHVGH). The short motif at 576-580 (KMSKS) is the 'KMSKS' region element. Lysine 579 is a binding site for ATP.

The protein belongs to the class-I aminoacyl-tRNA synthetase family.

It localises to the cytoplasm. It carries out the reaction tRNA(Leu) + L-leucine + ATP = L-leucyl-tRNA(Leu) + AMP + diphosphate. This Bacillus thuringiensis subsp. konkukian (strain 97-27) protein is Leucine--tRNA ligase.